A 135-amino-acid chain; its full sequence is Small ribosomal subunit protein uS9 (135 aa).

Over residues 108–118 (VGDPRRTEPHK) the composition is skewed to basic and acidic residues. The interval 108-135 (VGDPRRTEPHKPNRSTKGPRAKRQKSYR) is disordered. Residues 119 to 135 (PNRSTKGPRAKRQKSYR) are compositionally biased toward basic residues.

This sequence belongs to the universal ribosomal protein uS9 family.

This is Small ribosomal subunit protein uS9 (rps9) from Pyrococcus horikoshii (strain ATCC 700860 / DSM 12428 / JCM 9974 / NBRC 100139 / OT-3).